Reading from the N-terminus, the 484-residue chain is Sperm motility kinase Tcr mutant form (484 aa).

One can recognise a Protein kinase domain in the interval 8 to 256; the sequence is YEMLETIGQG…VAEVMVHPWV (249 aa). ATP is bound by residues 14-22 and K37; that span reads IGQGGCAQV. D127 (proton acceptor) is an active-site residue. 2 disordered regions span residues 355-400 and 426-446; these read EPTG…TMDQ and STEG…RGWP. Residues 391 to 400 show a composition bias toward polar residues; the sequence is PINTTPTMDQ.

This sequence belongs to the protein kinase superfamily. Tyr protein kinase family. Smok subfamily. As to expression, testis-specific. Expressed in the testis from 22 days postpartum (22 dpp). Expressed late in spermiogenesis, only in Tcr-containing t-haplotypes.

The catalysed reaction is L-seryl-[protein] + ATP = O-phospho-L-seryl-[protein] + ADP + H(+). It catalyses the reaction L-threonyl-[protein] + ATP = O-phospho-L-threonyl-[protein] + ADP + H(+). While the main function of Smoks is to control sperm motility, the role of Smok-Tcr, with reduced kinase activity, is to counterbalance a signaling impairment caused by the distorter/sterility loci, giving t-sperm an advantage in reaching the oocytes. Transmission ratio distortion also called segregation distortion is the name given to the phenomenon above-mentioned. Being associated with the T-complex, it allows males heterozygous for a complete t-haplotype to preferentially transmit the t-haplotype chromosome. This Mus musculus (Mouse) protein is Sperm motility kinase Tcr mutant form (Smoktcr).